The following is a 505-amino-acid chain: Lysine--tRNA ligase (505 aa).

The Mg(2+) site is built by glutamate 415 and glutamate 422.

This sequence belongs to the class-II aminoacyl-tRNA synthetase family. In terms of assembly, homodimer. It depends on Mg(2+) as a cofactor.

The protein resides in the cytoplasm. It carries out the reaction tRNA(Lys) + L-lysine + ATP = L-lysyl-tRNA(Lys) + AMP + diphosphate. The protein is Lysine--tRNA ligase (lysS) of Escherichia coli (strain K12).